We begin with the raw amino-acid sequence, 151 residues long: Transcriptional regulator MraZ (151 aa).

SpoVT-AbrB domains follow at residues 5 to 51 and 81 to 124; these read AHEL…PVAE and AEIL…GREQ.

The protein belongs to the MraZ family. As to quaternary structure, forms oligomers.

It is found in the cytoplasm. The protein localises to the nucleoid. This chain is Transcriptional regulator MraZ, found in Neisseria gonorrhoeae (strain ATCC 700825 / FA 1090).